Here is a 341-residue protein sequence, read N- to C-terminus: Putative amino-acid ABC transporter-binding protein YhdW (341 aa).

The signal sequence occupies residues 1-19 (MKKMMIATLAAASVLLAVA).

The protein belongs to the bacterial solute-binding protein 3 family.

Its subcellular location is the periplasm. Its function is as follows. Probably part of the binding-protein-dependent transport system YdhWXYZ for an amino acid. The sequence is that of Putative amino-acid ABC transporter-binding protein YhdW (yhdW) from Escherichia coli O157:H7.